Here is a 625-residue protein sequence, read N- to C-terminus: Phosphomethylpyrimidine synthase (625 aa).

Substrate-binding positions include asparagine 231, methionine 260, tyrosine 289, histidine 325, 345–347 (SRG), 386–389 (DGLR), and glutamate 425. Histidine 429 provides a ligand contact to Zn(2+). Tyrosine 452 serves as a coordination point for substrate. Histidine 493 is a Zn(2+) binding site. Residues cysteine 573, cysteine 576, and cysteine 581 each contribute to the [4Fe-4S] cluster site.

This sequence belongs to the ThiC family. Homodimer. Requires [4Fe-4S] cluster as cofactor.

The enzyme catalyses 5-amino-1-(5-phospho-beta-D-ribosyl)imidazole + S-adenosyl-L-methionine = 4-amino-2-methyl-5-(phosphooxymethyl)pyrimidine + CO + 5'-deoxyadenosine + formate + L-methionine + 3 H(+). It participates in cofactor biosynthesis; thiamine diphosphate biosynthesis. Its function is as follows. Catalyzes the synthesis of the hydroxymethylpyrimidine phosphate (HMP-P) moiety of thiamine from aminoimidazole ribotide (AIR) in a radical S-adenosyl-L-methionine (SAM)-dependent reaction. The protein is Phosphomethylpyrimidine synthase of Acinetobacter baumannii (strain SDF).